A 454-amino-acid polypeptide reads, in one-letter code: O-phospho-L-seryl-tRNA:Cys-tRNA synthase 2 (454 aa).

Pyridoxal 5'-phosphate-binding positions include 146–147 (AR), Asn-251, and 274–276 (SGH). Position 277 is an N6-(pyridoxal phosphate)lysine (Lys-277).

Belongs to the SepCysS family. In terms of assembly, homodimer. Interacts with SepRS. Pyridoxal 5'-phosphate is required as a cofactor.

The catalysed reaction is O-phospho-L-seryl-tRNA(Cys) + hydrogen sulfide + H(+) = L-cysteinyl-tRNA(Cys) + phosphate. Its function is as follows. Converts O-phospho-L-seryl-tRNA(Cys) (Sep-tRNA(Cys)) to L-cysteinyl-tRNA(Cys) (Cys-tRNA(Cys)). This Methanoregula boonei (strain DSM 21154 / JCM 14090 / 6A8) protein is O-phospho-L-seryl-tRNA:Cys-tRNA synthase 2.